The primary structure comprises 336 residues: Probable tRNA N6-adenosine threonylcarbamoyltransferase (336 aa).

Histidine 110, histidine 114, and tyrosine 131 together coordinate a divalent metal cation. Substrate contacts are provided by residues 131-135 (YVSGG), aspartate 163, glycine 178, glutamate 182, and asparagine 267. Aspartate 295 lines the a divalent metal cation pocket.

The protein belongs to the KAE1 / TsaD family. In terms of assembly, component of the EKC/KEOPS complex; the whole complex dimerizes. A divalent metal cation serves as cofactor.

The protein resides in the cytoplasm. It is found in the nucleus. It catalyses the reaction L-threonylcarbamoyladenylate + adenosine(37) in tRNA = N(6)-L-threonylcarbamoyladenosine(37) in tRNA + AMP + H(+). Functionally, component of the EKC/KEOPS complex that is required for the formation of a threonylcarbamoyl group on adenosine at position 37 (t(6)A37) in tRNAs that read codons beginning with adenine. The complex is probably involved in the transfer of the threonylcarbamoyl moiety of threonylcarbamoyl-AMP (TC-AMP) to the N6 group of A37. Osgep likely plays a direct catalytic role in this reaction, but requires other protein(s) of the complex to fulfill this activity. The sequence is that of Probable tRNA N6-adenosine threonylcarbamoyltransferase from Dictyostelium discoideum (Social amoeba).